The primary structure comprises 143 residues: Flagellar assembly factor FliW (143 aa).

This sequence belongs to the FliW family. Interacts with translational regulator CsrA and flagellin(s).

It is found in the cytoplasm. Its function is as follows. Acts as an anti-CsrA protein, binds CsrA and prevents it from repressing translation of its target genes, one of which is flagellin. Binds to flagellin and participates in the assembly of the flagellum. The polypeptide is Flagellar assembly factor FliW (Clostridium botulinum (strain 657 / Type Ba4)).